We begin with the raw amino-acid sequence, 497 residues long: Ectonucleoside triphosphate diphosphohydrolase 8 (497 aa).

Residues 1 to 8 lie on the Cytoplasmic side of the membrane; it reads MGLSWKER. Residues 9–29 traverse the membrane as a helical segment; sequence VFMALLGVAAASGLTMLVLIL. The Extracellular portion of the chain corresponds to 30-473; sequence VKAINVLLPA…AQSYSIWTAG (444 aa). An intrachain disulfide couples Cys-78 to Cys-102. Glu-168 acts as the Proton acceptor in catalysis. Cys-245 and Cys-294 are oxidised to a cystine. An N-linked (GlcNAc...) asparagine glycan is attached at Asn-306. Cys-331 and Cys-337 form a disulfide bridge. N-linked (GlcNAc...) asparagine glycosylation is present at Asn-365. Cys-383 and Cys-405 are disulfide-bonded. The chain crosses the membrane as a helical span at residues 474-494; sequence VVFAVLTLVAILGAAAIQIFW. Topologically, residues 495 to 497 are cytoplasmic; it reads TQD.

It belongs to the GDA1/CD39 NTPase family. Ca(2+) is required as a cofactor. It depends on Mg(2+) as a cofactor. N-glycosylated. In terms of tissue distribution, expressed in liver, jejunum and kidney.

It is found in the cell membrane. It carries out the reaction a ribonucleoside 5'-triphosphate + 2 H2O = a ribonucleoside 5'-phosphate + 2 phosphate + 2 H(+). In terms of biological role, canalicular ectonucleoside NTPDase responsible for the main hepatic NTPDase activity. Ectonucleoside NTPDases catalyze the hydrolysis of gamma- and beta-phosphate residues of nucleotides, playing a central role in concentration of extracellular nucleotides. Has activity toward ATP, ADP, UTP and UDP, but not toward AMP. This chain is Ectonucleoside triphosphate diphosphohydrolase 8 (Entpd8), found in Mus musculus (Mouse).